A 347-amino-acid chain; its full sequence is Phosphate acyltransferase (347 aa).

This sequence belongs to the PlsX family. In terms of assembly, homodimer. Probably interacts with PlsY.

It is found in the cytoplasm. The catalysed reaction is a fatty acyl-[ACP] + phosphate = an acyl phosphate + holo-[ACP]. Its pathway is lipid metabolism; phospholipid metabolism. Its function is as follows. Catalyzes the reversible formation of acyl-phosphate (acyl-PO(4)) from acyl-[acyl-carrier-protein] (acyl-ACP). This enzyme utilizes acyl-ACP as fatty acyl donor, but not acyl-CoA. This is Phosphate acyltransferase from Anaplasma marginale (strain St. Maries).